A 340-amino-acid chain; its full sequence is Peroxisomal adenine nucleotide transporter 1 (340 aa).

3 Solcar repeats span residues 4–119, 133–218, and 236–320; these read ENAV…VRKH, FSTP…LREA, and LSPG…LTKM. Helical transmembrane passes span 6 to 26, 96 to 116, 139 to 159, 190 to 210, 242 to 262, and 293 to 313; these read AVIG…LDLA, GSST…YTLV, LVLG…INVV, GFWA…ITYA, FVMG…LIIA, and WKGL…LFMF.

Belongs to the mitochondrial carrier (TC 2.A.29) family.

The protein resides in the peroxisome membrane. Adenine nucleotide transporter involved in the uniport of ATP and adenine nucleotide hetero-exchange transport between the cytosol and the peroxisomal lumen. This transport is accompanied by a proton transport from the peroxisomal lumen to the cytosol. Transport of ATP into the peroxisome is required for beta-oxidation of medium-chain fatty acids. The polypeptide is Peroxisomal adenine nucleotide transporter 1 (ANT1) (Eremothecium gossypii (strain ATCC 10895 / CBS 109.51 / FGSC 9923 / NRRL Y-1056) (Yeast)).